Consider the following 89-residue polypeptide: uncharacterized protein (89 aa).

3 helical membrane-spanning segments follow: residues 5–25 (AYLV…KRKA), 36–56 (RLWL…MQTF), and 67–87 (YGVP…YSPF).

Its subcellular location is the cell membrane. This is an uncharacterized protein from Bacillus subtilis (strain 168).